We begin with the raw amino-acid sequence, 140 residues long: uncharacterized protein (140 aa).

The next 2 helical transmembrane spans lie at 26-43 (YLDL…TGVI) and 64-86 (LLNF…NGVL).

It belongs to the bacteriophage holin family. Cp-1 holin subfamily.

Its subcellular location is the cell membrane. This is an uncharacterized protein from Bacillus subtilis (strain 168).